The following is a 67-amino-acid chain: Protein AaeX (67 aa).

Transmembrane regions (helical) follow at residues 9 to 29 and 47 to 67; these read IFGL…ALFF and PALF…CLFV.

This sequence belongs to the AaeX family.

It is found in the cell membrane. The polypeptide is Protein AaeX (Serratia marcescens).